Reading from the N-terminus, the 273-residue chain is 2,3,4,5-tetrahydropyridine-2,6-dicarboxylate N-succinyltransferase (273 aa).

Positions 104 and 141 each coordinate substrate.

The protein belongs to the transferase hexapeptide repeat family. In terms of assembly, homotrimer.

Its subcellular location is the cytoplasm. It carries out the reaction (S)-2,3,4,5-tetrahydrodipicolinate + succinyl-CoA + H2O = (S)-2-succinylamino-6-oxoheptanedioate + CoA. It functions in the pathway amino-acid biosynthesis; L-lysine biosynthesis via DAP pathway; LL-2,6-diaminopimelate from (S)-tetrahydrodipicolinate (succinylase route): step 1/3. This chain is 2,3,4,5-tetrahydropyridine-2,6-dicarboxylate N-succinyltransferase, found in Thioalkalivibrio sulfidiphilus (strain HL-EbGR7).